The sequence spans 239 residues: Ribonuclease 3 (239 aa).

One can recognise an RNase III domain in the interval His11 to Asp133. Glu46 contributes to the Mg(2+) binding site. The active site involves Asp50. 2 residues coordinate Mg(2+): Asp119 and Glu122. The active site involves Glu122. Positions Asp160 to Glu230 constitute a DRBM domain.

This sequence belongs to the ribonuclease III family. In terms of assembly, homodimer. The cofactor is Mg(2+).

It localises to the cytoplasm. The catalysed reaction is Endonucleolytic cleavage to 5'-phosphomonoester.. Digests double-stranded RNA. Involved in the processing of primary rRNA transcript to yield the immediate precursors to the large and small rRNAs (23S and 16S). Also processes some mRNAs, and tRNAs when they are encoded in the rRNA operon. Functionally, CRISPR (clustered regularly interspaced short palindromic repeat) is an adaptive immune system that provides protection against mobile genetic elements (viruses, transposable elements and conjugative plasmids). CRISPR clusters contain spacers, sequences complementary to antecedent mobile elements, and target invading nucleic acids. CRISPR clusters are transcribed and processed into CRISPR RNA (crRNA). In this organism endogenous ribonuclease 3 and Cas9 are required for correct coprocessing of pre-crRNA and the trans-encoded small RNA (tracrRNA). Cas9, crRNA and tracrRNA are required for cleavage of invading DNA. Complements pre-crRNA and tracrRNA coprocessing defects in an rnc deletion in S.pyogenes strain 370. The protein is Ribonuclease 3 of Neisseria meningitidis serogroup A / serotype 4A (strain DSM 15465 / Z2491).